Reading from the N-terminus, the 206-residue chain is Ribosome maturation factor RimM (206 aa).

The PRC barrel domain maps to 113–206 (DDEYYWVDLI…RIDSNWPTEL (94 aa)).

The protein belongs to the RimM family. Binds ribosomal protein uS19.

It localises to the cytoplasm. In terms of biological role, an accessory protein needed during the final step in the assembly of 30S ribosomal subunit, possibly for assembly of the head region. Essential for efficient processing of 16S rRNA. May be needed both before and after RbfA during the maturation of 16S rRNA. It has affinity for free ribosomal 30S subunits but not for 70S ribosomes. The protein is Ribosome maturation factor RimM of Bordetella petrii (strain ATCC BAA-461 / DSM 12804 / CCUG 43448).